A 108-amino-acid chain; its full sequence is uncharacterized protein (108 aa).

Residues 39 to 68 (GLRSRSGTGSGNSRNGLKESGGSRSGPGKP) are compositionally biased toward low complexity. Residues 39–95 (GLRSRSGTGSGNSRNGLKESGGSRSGPGKPRGNRKSSRRIRPRPTSEKPRGYWRSSW) form a disordered region. A compositionally biased stretch (basic residues) spans 69-80 (RGNRKSSRRIRP).

This is an uncharacterized protein from Acidithiobacillus ferridurans.